We begin with the raw amino-acid sequence, 489 residues long: FAD-containing monooxygenase EthA (489 aa).

FAD contacts are provided by residues Ser15, Glu36, 44–47 (TWDL), Asp56, and Val104. NADP(+) is bound at residue 54 to 56 (RSD). NADP(+)-binding positions include 183-189 (SGATAVT) and 207-208 (RS).

Belongs to the FAD-binding monooxygenase family. Requires FAD as cofactor.

It is found in the cell membrane. It catalyses the reaction ethionamide + NADPH + O2 + H(+) = ethionamide S-oxide + NADP(+) + H2O. Functionally, monooxygenase able to convert a wide range of ketones to the corresponding esters or lactones via a Baeyer-Villiger oxidation reaction. Can act on long-chain aliphatic ketones (2-hexanone to 2-dodecanone) and on aromatic ketones (phenylacetone and benzylacetone). Is also able to catalyze enantioselective sulfoxidation of methyl-p-tolylsulfide. In vivo, likely functions as a BVMO, but the exact nature of the physiological substrate(s) remains to be established. Its function is as follows. Is responsible for the activation of several thiocarbamide-containing pro-drugs, such as ethionamide (ETH), isoxyl (ISO) and thiacetazone (TAC), into reactive species. The sequence is that of FAD-containing monooxygenase EthA (ethA) from Mycobacterium bovis (strain ATCC BAA-935 / AF2122/97).